A 210-amino-acid chain; its full sequence is Pyridoxine/pyridoxamine 5'-phosphate oxidase (210 aa).

Residues 7–10 and lysine 65 each bind substrate; that span reads REDY. FMN is bound by residues 60–65, 75–76, arginine 81, lysine 82, and glutamine 104; these read RMVLLK and FT. Substrate contacts are provided by tyrosine 122, arginine 126, and serine 130. FMN is bound by residues 139 to 140 and tryptophan 183; that span reads QS. 189-191 is a substrate binding site; the sequence is RLH. Position 193 (arginine 193) interacts with FMN.

Belongs to the pyridoxamine 5'-phosphate oxidase family. As to quaternary structure, homodimer. FMN serves as cofactor.

The catalysed reaction is pyridoxamine 5'-phosphate + O2 + H2O = pyridoxal 5'-phosphate + H2O2 + NH4(+). The enzyme catalyses pyridoxine 5'-phosphate + O2 = pyridoxal 5'-phosphate + H2O2. Its pathway is cofactor metabolism; pyridoxal 5'-phosphate salvage; pyridoxal 5'-phosphate from pyridoxamine 5'-phosphate: step 1/1. It participates in cofactor metabolism; pyridoxal 5'-phosphate salvage; pyridoxal 5'-phosphate from pyridoxine 5'-phosphate: step 1/1. Catalyzes the oxidation of either pyridoxine 5'-phosphate (PNP) or pyridoxamine 5'-phosphate (PMP) into pyridoxal 5'-phosphate (PLP). The polypeptide is Pyridoxine/pyridoxamine 5'-phosphate oxidase (Neisseria meningitidis serogroup B (strain ATCC BAA-335 / MC58)).